We begin with the raw amino-acid sequence, 383 residues long: Acetylornithine deacetylase (383 aa).

His80 provides a ligand contact to Zn(2+). Residue Asp82 is part of the active site. Asp112 serves as a coordination point for Zn(2+). Glu144 is an active-site residue. Zn(2+)-binding residues include Glu145, Glu169, and His355.

It belongs to the peptidase M20A family. ArgE subfamily. Homodimer. Zn(2+) serves as cofactor. It depends on Co(2+) as a cofactor. The cofactor is glutathione.

Its subcellular location is the cytoplasm. The enzyme catalyses N(2)-acetyl-L-ornithine + H2O = L-ornithine + acetate. It participates in amino-acid biosynthesis; L-arginine biosynthesis; L-ornithine from N(2)-acetyl-L-ornithine (linear): step 1/1. Functionally, catalyzes the hydrolysis of the amide bond of N(2)-acetylated L-amino acids. Cleaves the acetyl group from N-acetyl-L-ornithine to form L-ornithine, an intermediate in L-arginine biosynthesis pathway, and a branchpoint in the synthesis of polyamines. This chain is Acetylornithine deacetylase, found in Escherichia coli O8 (strain IAI1).